A 105-amino-acid chain; its full sequence is Photosystem II 5 kDa protein, chloroplastic (105 aa).

A chloroplast-targeting transit peptide spans 1–77 (MASITMTTSF…ICSVAGVATA (77 aa)).

In terms of processing, the maturation of the PSII-T precursor to its final form occurs through a two step process. First, a stromal intermediate is formed, which, upon translocation into the thylakoid membrane, is processed to the mature protein.

The protein localises to the plastid. The protein resides in the chloroplast thylakoid membrane. Functionally, may be a component of the oxygen-evolving complex. The sequence is that of Photosystem II 5 kDa protein, chloroplastic (PSBT) from Gossypium hirsutum (Upland cotton).